Reading from the N-terminus, the 230-residue chain is Orotate phosphoribosyltransferase (230 aa).

5-phospho-alpha-D-ribose 1-diphosphate is bound by residues arginine 107, lysine 108, lysine 111, histidine 113, and 133–141 (EDLTTAGGS). Threonine 137 contributes to the orotate binding site.

The protein belongs to the purine/pyrimidine phosphoribosyltransferase family. PyrE subfamily. Homodimer. Mg(2+) is required as a cofactor.

The catalysed reaction is orotidine 5'-phosphate + diphosphate = orotate + 5-phospho-alpha-D-ribose 1-diphosphate. Its pathway is pyrimidine metabolism; UMP biosynthesis via de novo pathway; UMP from orotate: step 1/2. Functionally, catalyzes the transfer of a ribosyl phosphate group from 5-phosphoribose 1-diphosphate to orotate, leading to the formation of orotidine monophosphate (OMP). The protein is Orotate phosphoribosyltransferase of Allorhizobium ampelinum (strain ATCC BAA-846 / DSM 112012 / S4) (Agrobacterium vitis (strain S4)).